Reading from the N-terminus, the 238-residue chain is Pyridoxine 5'-phosphate synthase (238 aa).

Asn7 is a 3-amino-2-oxopropyl phosphate binding site. 9–10 serves as a coordination point for 1-deoxy-D-xylulose 5-phosphate; it reads DH. Residue Arg18 participates in 3-amino-2-oxopropyl phosphate binding. His43 (proton acceptor) is an active-site residue. Positions 45 and 50 each coordinate 1-deoxy-D-xylulose 5-phosphate. The Proton acceptor role is filled by Glu70. Thr100 is a 1-deoxy-D-xylulose 5-phosphate binding site. His191 serves as the catalytic Proton donor. 3-amino-2-oxopropyl phosphate contacts are provided by residues Gly192 and 213-214; that span reads GH.

The protein belongs to the PNP synthase family. In terms of assembly, homooctamer; tetramer of dimers.

It is found in the cytoplasm. The enzyme catalyses 3-amino-2-oxopropyl phosphate + 1-deoxy-D-xylulose 5-phosphate = pyridoxine 5'-phosphate + phosphate + 2 H2O + H(+). Its pathway is cofactor biosynthesis; pyridoxine 5'-phosphate biosynthesis; pyridoxine 5'-phosphate from D-erythrose 4-phosphate: step 5/5. Its function is as follows. Catalyzes the complicated ring closure reaction between the two acyclic compounds 1-deoxy-D-xylulose-5-phosphate (DXP) and 3-amino-2-oxopropyl phosphate (1-amino-acetone-3-phosphate or AAP) to form pyridoxine 5'-phosphate (PNP) and inorganic phosphate. The chain is Pyridoxine 5'-phosphate synthase from Syntrophobacter fumaroxidans (strain DSM 10017 / MPOB).